The primary structure comprises 1054 residues: Leucine-rich repeats and immunoglobulin-like domains protein 2 (1054 aa).

An N-terminal signal peptide occupies residues 1–39 (MAAAPRGIWEQRRLGCGLGPLARLLILAQALRLLPAARA). Positions 40–74 (GLCPAPCACRLPLLDCSRRKLPAPSWRALSGPLPS) constitute an LRRNT domain. 15 LRR repeats span residues 75–96 (DISS…LESQ), 97–118 (TLQE…GEPT), 120–141 (NITL…AFEL), 144–165 (ALES…SFPR), 167–188 (SLKY…CFDN), 192–213 (SLLV…VFKL), 215–236 (HLQF…TFQG), 239–260 (SLRS…AFFG), 263–284 (NMEE…WLYG), 287–308 (MLQQ…AWEF), 311–332 (RLSE…AFVG), 335–356 (LLER…VFRF), 359–381 (NLQT…SEAF), 386–407 (SLTK…AFIG), and 410–431 (SLEY…AFSQ). N90 carries N-linked (GlcNAc...) asparagine glycosylation. The N-linked (GlcNAc...) asparagine glycan is linked to N120. Residues N172 and N188 are each glycosylated (N-linked (GlcNAc...) asparagine). N-linked (GlcNAc...) asparagine glycosylation occurs at N273. N440, N467, N513, N570, and N588 each carry an N-linked (GlcNAc...) asparagine glycan. The LRRCT domain maps to 442-493 (SSLLCDCHLKWLLQWLVDNNFHHSVNVSCAHPEWLAGQSILNVDLKDFVCDD). 3 Ig-like C2-type domains span residues 497–596 (PQIR…AKLT), 601–690 (PSFL…ASLT), and 695–784 (PSFI…NVIS). A disulfide bond links C518 and C579. A disulfide bridge connects residues C622 and C674. Residues N686 and N727 are each glycosylated (N-linked (GlcNAc...) asparagine). Residues C716 and C765 are joined by a disulfide bond. Residues 807–827 (IVIIVVVCCVVGTSLIWVIVI) form a helical membrane-spanning segment. A Phosphotyrosine modification is found at Y905. An N-linked (GlcNAc...) asparagine glycan is attached at N1024.

It is found in the cell membrane. It localises to the cytoplasm. The protein is Leucine-rich repeats and immunoglobulin-like domains protein 2 (Lrig2) of Mus musculus (Mouse).